The primary structure comprises 80 residues: Putative antitoxin VapB44 (80 aa).

Residues 40–68 form a disordered region; that stretch reads NQNPQPAASQEDAFHGFEPLPHRGGAVSN.

In terms of biological role, possibly the antitoxin component of a type II toxin-antitoxin (TA) system. Its cognate toxin is VapC44 (Potential). The protein is Putative antitoxin VapB44 (vapB44) of Mycobacterium tuberculosis (strain CDC 1551 / Oshkosh).